The sequence spans 413 residues: Serine--tRNA ligase (413 aa).

221–223 (TAE) serves as a coordination point for L-serine. 252-254 (RRE) is an ATP binding site. Glu275 lines the L-serine pocket. 339-342 (EVSS) contacts ATP. Ser375 is an L-serine binding site.

The protein belongs to the class-II aminoacyl-tRNA synthetase family. Type-1 seryl-tRNA synthetase subfamily. Homodimer. The tRNA molecule binds across the dimer.

It localises to the cytoplasm. The enzyme catalyses tRNA(Ser) + L-serine + ATP = L-seryl-tRNA(Ser) + AMP + diphosphate + H(+). It carries out the reaction tRNA(Sec) + L-serine + ATP = L-seryl-tRNA(Sec) + AMP + diphosphate + H(+). It functions in the pathway aminoacyl-tRNA biosynthesis; selenocysteinyl-tRNA(Sec) biosynthesis; L-seryl-tRNA(Sec) from L-serine and tRNA(Sec): step 1/1. Functionally, catalyzes the attachment of serine to tRNA(Ser). Is also able to aminoacylate tRNA(Sec) with serine, to form the misacylated tRNA L-seryl-tRNA(Sec), which will be further converted into selenocysteinyl-tRNA(Sec). The polypeptide is Serine--tRNA ligase (Dehalococcoides mccartyi (strain ATCC BAA-2266 / KCTC 15142 / 195) (Dehalococcoides ethenogenes (strain 195))).